A 56-amino-acid polypeptide reads, in one-letter code: MAVPKKRTSKSKTNLRKTVWKKKALKQAIQAYFIASRASKKLNLEKAITKDLNTES.

It belongs to the bacterial ribosomal protein bL32 family.

The protein localises to the plastid. The protein resides in the chloroplast. In Tupiella akineta (Green alga), this protein is Large ribosomal subunit protein bL32c.